The primary structure comprises 197 residues: 7-methyl-GTP pyrophosphatase (197 aa).

The active-site Proton acceptor is the aspartate 74.

Belongs to the Maf family. YceF subfamily. Requires a divalent metal cation as cofactor.

The protein resides in the cytoplasm. The enzyme catalyses N(7)-methyl-GTP + H2O = N(7)-methyl-GMP + diphosphate + H(+). In terms of biological role, nucleoside triphosphate pyrophosphatase that hydrolyzes 7-methyl-GTP (m(7)GTP). May have a dual role in cell division arrest and in preventing the incorporation of modified nucleotides into cellular nucleic acids. This is 7-methyl-GTP pyrophosphatase from Saccharophagus degradans (strain 2-40 / ATCC 43961 / DSM 17024).